Reading from the N-terminus, the 227-residue chain is Lysosomal-associated transmembrane protein 4B (227 aa).

4 helical membrane-spanning segments follow: residues 26-46, 72-92, 100-120, and 153-173; these read ILLG…LLSA, MCIA…ATYG, WIIP…LVAI, and CLVL…GYLI. Positions 205-222 are required for NEDD4 interaction; the sequence is PPYDDATAVPSTAKEPPP.

Belongs to the LAPTM4/LAPTM5 transporter family. Homooligomer; upon reaching the lysosomes. Interacts with MCOLN1. Interacts with NEDD4; may play a role in the lysosomal sorting of LAPTM4B; enhances HGS association with NEDD4; mediates inhibition of EGFR degradation. Interacts with PIP5K1C; promotes SNX5 association with LAPTM4B; kinase activity of PIP5K1C is required; interaction is regulated by phosphatidylinositol 4,5-bisphosphate generated by PIP5K1C. Interacts with HGS; promotes HGS ubiquitination. Interacts with SNX5. Interacts with SLC3A2 and SLC7A5; recruits SLC3A2 and SLC7A5 to lysosomes to promote leucine uptake into these organelles and is required for mTORC1 activation. Interacts with LRRC32; decreases TGFB1 production in regulatory T cells. Interacts with BECN1; competes with EGFR for LAPTM4B binding; regulates EGFR activity. Interacts with EGFR; positively correlates with EGFR activation. In terms of processing, undergoes proteolytic cleavage following delivery to the lysosomes. Post-translationally, ubiquitinated by NEDD4.

Its subcellular location is the endomembrane system. It localises to the late endosome membrane. The protein resides in the cell membrane. The protein localises to the cell projection. It is found in the lysosome membrane. Its subcellular location is the endosome membrane. It localises to the endosome. The protein resides in the multivesicular body membrane. The protein localises to the multivesicular body lumen. Its function is as follows. Required for optimal lysosomal function. Blocks EGF-stimulated EGFR intraluminal sorting and degradation. Conversely by binding with the phosphatidylinositol 4,5-bisphosphate, regulates its PIP5K1C interaction, inhibits HGS ubiquitination and relieves LAPTM4B inhibition of EGFR degradation. Recruits SLC3A2 and SLC7A5 (the Leu transporter) to the lysosome, promoting entry of leucine and other essential amino acid (EAA) into the lysosome, stimulating activation of proton-transporting vacuolar (V)-ATPase protein pump (V-ATPase) and hence mTORC1 activation. Plays a role as negative regulator of TGFB1 production in regulatory T cells. Binds ceramide and facilitates its exit from late endosome in order to control cell death pathways. This Mus musculus (Mouse) protein is Lysosomal-associated transmembrane protein 4B.